The primary structure comprises 433 residues: Glucoside xylosyltransferase 1 (433 aa).

Residues 1 to 6 lie on the Cytoplasmic side of the membrane; it reads MRRFAR. The helical; Signal-anchor for type II membrane protein transmembrane segment at 7 to 29 threads the bilayer; that stretch reads VALLFLGCGVCSLLYGVSQLALS. Residues 30 to 433 are Lumenal-facing; the sequence is LEQEAGGARQ…DLSVRRSKGS (404 aa). A disordered region spans residues 39–64; that stretch reads QRQARESAAPGGGRQAGSADGGEEGA. N-linked (GlcNAc...) asparagine glycosylation is found at N69, N166, N271, N305, and N380.

This sequence belongs to the glycosyltransferase 8 family.

Its subcellular location is the membrane. It catalyses the reaction 3-O-(beta-D-glucosyl)-L-seryl-[EGF-like domain protein] + UDP-alpha-D-xylose = 3-O-[alpha-D-xylosyl-(1-&gt;3)-beta-D-glucosyl]-L-seryl-[EGF-like domain protein] + UDP + H(+). Functionally, glycosyltransferase which elongates the O-linked glucose attached to EGF-like repeats in the extracellular domain of Notch proteins by catalyzing the addition of xylose. In Gallus gallus (Chicken), this protein is Glucoside xylosyltransferase 1 (GXYLT1).